The following is a 184-amino-acid chain: Protein Syd (184 aa).

It belongs to the Syd family.

The protein localises to the cell inner membrane. Interacts with the SecY protein in vivo. May bind preferentially to an uncomplexed state of SecY, thus functioning either as a chelating agent for excess SecY in the cell or as a regulatory factor that negatively controls the translocase function. In Photobacterium profundum (strain SS9), this protein is Protein Syd.